The primary structure comprises 128 residues: Large ribosomal subunit protein eL22 (128 aa).

It belongs to the eukaryotic ribosomal protein eL22 family. As to quaternary structure, component of the large ribosomal subunit.

It localises to the cytoplasm. Functionally, component of the large ribosomal subunit. The ribosome is a large ribonucleoprotein complex responsible for the synthesis of proteins in the cell. The protein is Large ribosomal subunit protein eL22 (RPL22) of Gallus gallus (Chicken).